We begin with the raw amino-acid sequence, 750 residues long: (13E)-labda-7,13-dien-15-ol synthase (750 aa).

Residues Asp-284, Asp-286, Asp-501, Asp-505, Asn-647, Thr-651, and Glu-655 each contribute to the Mg(2+) site. The DXDD motif signature appears at 284–287 (DIDD). The short motif at 501–505 (DDLAD) is the DDXXD motif element.

Belongs to the terpene synthase family. It depends on Mg(2+) as a cofactor.

The enzyme catalyses geranylgeranyl diphosphate + H2O = (13E)-labda-7,13-dien-15-ol + diphosphate. The protein operates within secondary metabolite biosynthesis; terpenoid biosynthesis. Bifunctional diterpene synthase that directly generates the endocyclic double bond, as well as the hydroxyl group: produces an endocyclic double bond isomer of copalyl diphosphate (CPP), and carries out subsequent replacement of the diphosphate by a hydroxyl group to form (13E)-labda-7,13-dien-15-ol. This chain is (13E)-labda-7,13-dien-15-ol synthase, found in Selaginella moellendorffii (Spikemoss).